A 410-amino-acid chain; its full sequence is Neuroserpin (410 aa).

An N-terminal signal peptide occupies residues 1-16 (MYFLGLLSLLVLPSKA). N-linked (GlcNAc...) asparagine glycosylation is found at Asn-157 and Asn-401.

The protein belongs to the serpin family. In terms of tissue distribution, detected in embryonic ocular vitreous fluid (at protein level). In the embryo present in retina, brain, cerebellum and spinal cord. In adult, predominantly expressed in the brain.

The protein localises to the secreted. It is found in the cytoplasmic vesicle. It localises to the secretory vesicle lumen. Its subcellular location is the perikaryon. Serine protease inhibitor that inhibits plasminogen activators and plasmin but not thrombin. May be involved in the formation or reorganization of synaptic connections as well as for synaptic plasticity in the adult nervous system. May protect neurons from cell damage by tissue-type plasminogen activator. This Gallus gallus (Chicken) protein is Neuroserpin (SERPINI1).